A 969-amino-acid polypeptide reads, in one-letter code: Endogenous retrovirus group K member 11 Pol protein (969 aa).

The Reverse transcriptase domain maps to 57–245 (LEKGHIEPSF…TPFHYLGMQI (189 aa)). Residues 161–164 (LPQG) carry the LPQG motif. In terms of domain architecture, RNase H type-1 spans 460-590 (LENALTVFTD…ADLLVSSALI (131 aa)). Mg(2+) contacts are provided by Asp469, Glu497, Asp517, and Asp582. The Integrase-type zinc-finger motif lies at 587–628 (SALIKAQELHALTHVNAAGLKNKFDVTWKQAKDIVQHCTQCQ). Zn(2+)-binding residues include His596, His600, Cys624, and Cys627. Residues 642-803 (RGLCPNALWQ…TSAEQHLTGK (162 aa)) form the Integrase catalytic domain. The segment at residues 811–859 (KLIWWKDNKNKTWEIGKVITWGRGFACVSPGENQLPVWIPTRHLKFYNE) is a DNA-binding region (integrase-type).

The protein belongs to the beta type-B retroviral polymerase family. HERV class-II K(HML-2) pol subfamily.

The enzyme catalyses DNA(n) + a 2'-deoxyribonucleoside 5'-triphosphate = DNA(n+1) + diphosphate. The catalysed reaction is Endonucleolytic cleavage to 5'-phosphomonoester.. In terms of biological role, early post-infection, the reverse transcriptase converts the viral RNA genome into double-stranded viral DNA. The RNase H domain of the reverse transcriptase performs two functions. It degrades the RNA template and specifically removes the RNA primer from the RNA/DNA hybrid. Following nuclear import, the integrase catalyzes the insertion of the linear, double-stranded viral DNA into the host cell chromosome. Endogenous Pol proteins may have kept, lost or modified their original function during evolution. The chain is Endogenous retrovirus group K member 11 Pol protein (ERVK-11) from Homo sapiens (Human).